The chain runs to 235 residues: Phosphoribosylaminoimidazole-succinocarboxamide synthase (235 aa).

It belongs to the SAICAR synthetase family.

It carries out the reaction 5-amino-1-(5-phospho-D-ribosyl)imidazole-4-carboxylate + L-aspartate + ATP = (2S)-2-[5-amino-1-(5-phospho-beta-D-ribosyl)imidazole-4-carboxamido]succinate + ADP + phosphate + 2 H(+). Its pathway is purine metabolism; IMP biosynthesis via de novo pathway; 5-amino-1-(5-phospho-D-ribosyl)imidazole-4-carboxamide from 5-amino-1-(5-phospho-D-ribosyl)imidazole-4-carboxylate: step 1/2. The sequence is that of Phosphoribosylaminoimidazole-succinocarboxamide synthase from Chlorobaculum parvum (strain DSM 263 / NCIMB 8327) (Chlorobium vibrioforme subsp. thiosulfatophilum).